The chain runs to 826 residues: Lon protease (826 aa).

Residues 26-221 (LPMLPVRDVV…AVNGFVSREV (196 aa)) enclose the Lon N-terminal domain. 373–380 (GPPGVGKT) lines the ATP pocket. Positions 609–790 (EPQIGLATGL…NEVLEKALLP (182 aa)) constitute a Lon proteolytic domain. Residues S696 and K739 contribute to the active site. The tract at residues 788-826 (LLPAEKKKAPPKKKPPKKAAKPKAKKTQPKAKTTEAADK) is disordered. The span at 796 to 816 (APPKKKPPKKAAKPKAKKTQP) shows a compositional bias: basic residues.

It belongs to the peptidase S16 family. As to quaternary structure, homohexamer. Organized in a ring with a central cavity.

It localises to the cytoplasm. The catalysed reaction is Hydrolysis of proteins in presence of ATP.. In terms of biological role, ATP-dependent serine protease that mediates the selective degradation of mutant and abnormal proteins as well as certain short-lived regulatory proteins. Required for cellular homeostasis and for survival from DNA damage and developmental changes induced by stress. Degrades polypeptides processively to yield small peptide fragments that are 5 to 10 amino acids long. Binds to DNA in a double-stranded, site-specific manner. The polypeptide is Lon protease (Desulfatibacillum aliphaticivorans).